A 420-amino-acid chain; its full sequence is Glutamate dehydrogenase (420 aa).

Residue K105 is part of the active site. 220-226 (GYGNAGY) lines the NAD(+) pocket.

Belongs to the Glu/Leu/Phe/Val dehydrogenases family. As to quaternary structure, homohexamer.

Its subcellular location is the cytoplasm. It carries out the reaction L-glutamate + NAD(+) + H2O = 2-oxoglutarate + NH4(+) + NADH + H(+). The enzyme catalyses L-glutamate + NADP(+) + H2O = 2-oxoglutarate + NH4(+) + NADPH + H(+). The sequence is that of Glutamate dehydrogenase (gdhA) from Pyrococcus abyssi (strain GE5 / Orsay).